We begin with the raw amino-acid sequence, 322 residues long: p55-v-Fos-transforming protein (322 aa).

The interval 69 to 95 is disordered; that stretch reads APGGRGQSIGRRGKVEQLSPEEEEKRR. In terms of domain architecture, bZIP spans 91 to 154; the sequence is EEKRRIRRER…EKLEFILAAH (64 aa). Positions 93-113 are basic motif; that stretch reads KRRIRRERNKMAAAKCRNRRR. Positions 119–147 are leucine-zipper; it reads LQAETDQLEEEKSALQAEIANLLKEKEKL. Positions 298 to 322 are disordered; it reads AAHRKGSSSNEPSSDSLSSPTLLAL. Residues 304–316 are compositionally biased toward low complexity; it reads SSSNEPSSDSLSS.

The protein belongs to the bZIP family. Fos subfamily.

The protein resides in the host nucleus. This chain is p55-v-Fos-transforming protein (V-FOS), found in Galliformes.